A 124-amino-acid chain; its full sequence is Large ribosomal subunit protein uL18 (124 aa).

It belongs to the universal ribosomal protein uL18 family. As to quaternary structure, part of the 50S ribosomal subunit; part of the 5S rRNA/L5/L18/L25 subcomplex. Contacts the 5S and 23S rRNAs.

This is one of the proteins that bind and probably mediate the attachment of the 5S RNA into the large ribosomal subunit, where it forms part of the central protuberance. The polypeptide is Large ribosomal subunit protein uL18 (Orientia tsutsugamushi (strain Boryong) (Rickettsia tsutsugamushi)).